The following is a 264-amino-acid chain: S-adenosylmethionine decarboxylase proenzyme (264 aa).

Residue serine 112 is the Schiff-base intermediate with substrate; via pyruvic acid of the active site. At serine 112 the chain carries Pyruvic acid (Ser); by autocatalysis. Catalysis depends on histidine 117, which acts as the Proton acceptor; for processing activity. Cysteine 140 acts as the Proton donor; for catalytic activity in catalysis.

This sequence belongs to the prokaryotic AdoMetDC family. Type 2 subfamily. In terms of assembly, heterooctamer of four alpha and four beta chains arranged as a tetramer of alpha/beta heterodimers. Requires pyruvate as cofactor. In terms of processing, is synthesized initially as an inactive proenzyme. Formation of the active enzyme involves a self-maturation process in which the active site pyruvoyl group is generated from an internal serine residue via an autocatalytic post-translational modification. Two non-identical subunits are generated from the proenzyme in this reaction, and the pyruvate is formed at the N-terminus of the alpha chain, which is derived from the carboxyl end of the proenzyme. The post-translation cleavage follows an unusual pathway, termed non-hydrolytic serinolysis, in which the side chain hydroxyl group of the serine supplies its oxygen atom to form the C-terminus of the beta chain, while the remainder of the serine residue undergoes an oxidative deamination to produce ammonia and the pyruvoyl group blocking the N-terminus of the alpha chain.

The enzyme catalyses S-adenosyl-L-methionine + H(+) = S-adenosyl 3-(methylsulfanyl)propylamine + CO2. Its pathway is amine and polyamine biosynthesis; S-adenosylmethioninamine biosynthesis; S-adenosylmethioninamine from S-adenosyl-L-methionine: step 1/1. Functionally, catalyzes the decarboxylation of S-adenosylmethionine to S-adenosylmethioninamine (dcAdoMet), the propylamine donor required for the synthesis of the polyamines spermine and spermidine from the diamine putrescine. This is S-adenosylmethionine decarboxylase proenzyme from Citrobacter koseri (strain ATCC BAA-895 / CDC 4225-83 / SGSC4696).